Consider the following 233-residue polypeptide: Cysteine-rich venom protein LIO1 (233 aa).

The signal sequence occupies residues 1-18; that stretch reads MIVFILLSFAAVLQQSFG. In terms of domain architecture, SCP spans 37–165; the sequence is VDTHNSYRRS…PYNYFYVCQY (129 aa). Intrachain disulfides connect Cys74–Cys152, Cys91–Cys166, Cys147–Cys163, Cys185–Cys192, Cys188–Cys197, Cys210–Cys228, and Cys219–Cys232. The ShKT domain maps to 201 to 233; that stretch reads CTSENVFTNCNDMVKESGCQDERMKSICPASCF.

It belongs to the CRISP family. Expressed by the venom gland.

The protein localises to the secreted. In terms of biological role, blocks contraction of smooth muscle elicited by high potassium-induced depolarization, but does not block caffeine-stimulated contraction. May target voltage-gated calcium channels on smooth muscle. The polypeptide is Cysteine-rich venom protein LIO1 (Erythrolamprus poecilogyrus (Water snake)).